Here is a 351-residue protein sequence, read N- to C-terminus: Dysbindin (351 aa).

A coiled-coil region spans residues 106–179; that stretch reads FLADLECLTA…AELDAEHAQK (74 aa). The segment at 291-325 is disordered; the sequence is RHKLSSLSSTCTDSASQEASEGESPVVQSDEEEVQ. Over residues 295–306 the composition is skewed to low complexity; the sequence is SSLSSTCTDSAS.

This sequence belongs to the dysbindin family. Component of the biogenesis of lysosome-related organelles complex 1 (BLOC-1).

It is found in the cytoplasm. It localises to the cytoplasmic vesicle membrane. The protein resides in the cytoplasmic vesicle. The protein localises to the secretory vesicle. Its subcellular location is the synaptic vesicle membrane. It is found in the endosome membrane. It localises to the melanosome membrane. The protein resides in the nucleus. The protein localises to the postsynaptic density. Its subcellular location is the endoplasmic reticulum. In terms of biological role, component of the BLOC-1 complex, a complex that is required for normal biogenesis of lysosome-related organelles (LRO), such as platelet dense granules and melanosomes. Plays a role in intracellular vesicle trafficking. Plays a role in synaptic vesicle trafficking and in neurotransmitter release. May be required for normal dopamine homeostasis in the cerebral cortex, hippocampus, and hypothalamus. Plays a role in the regulation of cell surface exposure of DRD2. Contributes to the regulation of dopamine signaling. May play a role in actin cytoskeleton reorganization and neurite outgrowth. The chain is Dysbindin (DTNBP1) from Gallus gallus (Chicken).